Consider the following 258-residue polypeptide: SLA class II histocompatibility antigen, DQ haplotype D beta chain (258 aa).

A signal peptide spans 1–31 (MVALRLPRGLWTAALTVMLVVLGAPVAEGRD). A beta-1 region spans residues 32–123 (SPQDFVVQFK…IEEGTTLQRR (92 aa)). Over 32 to 227 (SPQDFVVQFK…RAQSESAQSK (196 aa)) the chain is Extracellular. 2 disulfides stabilise this stretch: cysteine 44-cysteine 108 and cysteine 146-cysteine 202. Asparagine 48 carries an N-linked (GlcNAc...) asparagine glycan. The beta-2 stretch occupies residues 124–217 (VQPTVTISPS…SLQSPILVEW (94 aa)). The Ig-like C1-type domain maps to 126 to 230 (PTVTISPSKA…SESAQSKMLS (105 aa)). The tract at residues 218-227 (RAQSESAQSK) is connecting peptide. The chain crosses the membrane as a helical span at residues 228–248 (MLSGVGGFVLGLIFLGLGLFI). At 249–258 (RHRSQKGLVR) the chain is on the cytoplasmic side.

It belongs to the MHC class II family.

The protein resides in the membrane. The chain is SLA class II histocompatibility antigen, DQ haplotype D beta chain from Sus scrofa (Pig).